We begin with the raw amino-acid sequence, 947 residues long: Bromodomain testis-specific protein (947 aa).

The 107-residue stretch at 27 to 133 folds into the Bromo 1 domain; that stretch reads RLTNQLQYLQ…KLFMQKLSQM (107 aa). Asparagine 109 is a binding site for JQ1. Serine 187 bears the Phosphoserine mark. The tract at residues 202–228 is disordered; it reads QTAAQVTKGVKRKADTTTPATSAVKAS. Positions 209-220 match the Nuclear localization signal motif; the sequence is KGVKRKADTTTP. The segment covering 217–228 has biased composition (polar residues); that stretch reads TTTPATSAVKAS. The Bromo 2 domain occupies 267–376; it reads VKVTEQLRHC…DVFETHFSKI (110 aa). 4 disordered regions span residues 395 to 420, 444 to 511, 610 to 698, and 882 to 924; these read ETTG…DERV, PFRK…KPMN, NNQL…IPPE, and NKCS…RRRE. A coiled-coil region spans residues 417 to 470; the sequence is DERVKRLAKLQEQLKAVHQQLQVLSQVPFRKLNKKKEKSKKEKKKEKVNNSNEN. Basic residues predominate over residues 447-462; the sequence is KLNKKKEKSKKEKKKE. A compositionally biased stretch (basic and acidic residues) spans 470 to 481; the sequence is NPRKMCEQMRLK. Residues 482-494 show a composition bias toward basic residues; that stretch reads EKSKRNQPKKRKQ. An NET domain is found at 500–582; it reads KSEDEDNAKP…ACLRKRPLKP (83 aa). A coiled-coil region spans residues 591–621; it reads KEELHSQKKQELEKRLLDVNNQLNSRKRQTK. The segment covering 637-662 has biased composition (low complexity); the sequence is LSESSSSSSSSSESESSSSDLSSSDS. Composition is skewed to basic and acidic residues over residues 674–692 and 885–924; these read TEVK…KMKN and SGEE…RRRE.

Belongs to the BET family. As to quaternary structure, interacts with mRNA splicing machinery proteins SRSF2, DDX5, HNRNPK and TARDBP. Interacts with the acetylated N-terminus of histone H1, H2, H3 and H4. Interacts with P-TEFb components CDK9 and CCNT1/cyclin-T1. Interacts with SMARCE1. Interacts with the acetylated N-terminus of histone H1.4, H2A, H2B, H3 and H4. Post-translationally, ubiquitinated in a SPOP-dependent manner, leading to proteasomal degradation. Testis-specific. A 3-fold higher expression is seen in adult testis than in embryo testis. Expression seems to be correlated with histone H4 hyperacetylation during the haploid phase of spermatogenesis (spermiogenesis). No expression, or very low expression is seen in patients' testes with abnormal spermatogenesis. Expressed in cancers such as non-small cell lung cancer and squamous cell carcinomas of the head and neck as well as of esophagus, but not in melanoma or in cancers of the colon, breast, kidney and bladder.

It is found in the nucleus. Its function is as follows. Testis-specific chromatin protein that specifically binds histone H4 acetylated at 'Lys-5' and 'Lys-8' (H4K5ac and H4K8ac, respectively) and plays a key role in spermatogenesis. Required in late pachytene spermatocytes: plays a role in meiotic and post-meiotic cells by binding to acetylated histones at the promoter of specific meiotic and post-meiotic genes, facilitating their activation at the appropriate time. In the post-meiotic phase of spermatogenesis, binds to hyperacetylated histones and participates in their general removal from DNA. Also recognizes and binds a subset of butyrylated histones: able to bind histone H4 butyrylated at 'Lys-8' (H4K8ac), while it is not able to bind H4 butyrylated at 'Lys-5' (H4K5ac). Also acts as a component of the splicing machinery in pachytene spermatocytes and round spermatids and participates in 3'-UTR truncation of specific mRNAs in post-meiotic spermatids. Required for chromocenter organization, a structure comprised of peri-centromeric heterochromatin. This chain is Bromodomain testis-specific protein (BRDT), found in Homo sapiens (Human).